The following is a 478-amino-acid chain: Odorant receptor coreceptor (478 aa).

The Cytoplasmic portion of the chain corresponds to 1 to 43 (MNVQPTKYHGLVLDLMPNIRLMQGFGHFLFRYVNGPVLIRKLY). The helical transmembrane segment at 44 to 64 (SWWNLIMILLQYFAIMGNLVM) threads the bilayer. Topologically, residues 65–73 (NTGDVNELT) are extracellular. Residues 74-94 (ANTITTLFFTHSVTKFIYVAV) traverse the membrane as a helical segment. Residues 95–133 (NSEHFYRTLGIWNQPNSHSLFAESDARYHSIALAKMRKL) lie on the Cytoplasmic side of the membrane. The chain crosses the membrane as a helical span at residues 134–154 (LVMVMVTTVLSVVAWITITFF). Over 155–187 (GDSVKNVFDKETNETYTVEIPRLPIKAWYPWDA) the chain is Extracellular. An N-linked (GlcNAc...) asparagine glycan is attached at Asn167. Residues 188–208 (MSGVPYFFSFIYQAYFLLFSM) form a helical membrane-spanning segment. Topologically, residues 209 to 343 (CQANLADVMF…VERHKHVVRL (135 aa)) are cytoplasmic. A helical membrane pass occupies residues 344–364 (VSAIGETYGAALLLHMLTSTI). The Extracellular portion of the chain corresponds to 365–382 (KLTLLAYQATKIDALNVY). Residues 383 to 403 (GLTVIGYLVYALAQVFLFCIF) traverse the membrane as a helical segment. At 404–454 (GNRLIEESSSVMEAAYSCHWYDGSEEAKTFVQIVCQQCQKAMTISGAKFFT) the chain is on the cytoplasmic side. The chain crosses the membrane as a helical span at residues 455 to 475 (VSLDLFASVLGAVVTYFMVLV). Over 476 to 478 (QLK) the chain is Extracellular.

It belongs to the insect chemoreceptor superfamily. Heteromeric odorant receptor channel (TC 1.A.69) family. Orco subfamily. As to quaternary structure, heterodimer with conventional odorant receptors (ORs). Complexes exist early in the endomembrane system in olfactory sensory neurons (OSNs), coupling these complexes to the conserved ciliary trafficking pathway. In terms of tissue distribution, found specifically within most antennal and maxillary palp sensilla, as well as in a subset of proboscis sensilla.

The protein localises to the cell membrane. Its function is as follows. Odorant coreceptor which complexes with conventional odorant receptors (ORs) to form odorant-sensing units, providing sensitive and prolonged odorant signaling and calcium permeability. Orco is a universal and integral part of the functional odorant receptor, involved in the dendritic localization of other olfactory receptors. Plays a key role in preferred attraction of females for humans over non-human hosts for blood feeding. Human attraction plays a crucial role in the transmission of dengue and yellow fever by the mosquito. Also required for the response to the insect repellent IR3535; or to N,N-Diethyl-meta-toluamide (DEET), the most widely used insect repellent worldwide. The chain is Odorant receptor coreceptor (SGPRor7) from Aedes aegypti (Yellowfever mosquito).